A 301-amino-acid polypeptide reads, in one-letter code: D-alanine--D-alanine ligase (301 aa).

Residues 102-295 (KAVFAAAGLP…FPALCAWMVE (194 aa)) form the ATP-grasp domain. 128-181 (PLPRPYVIKPVNEGSSVGVFILREGDNRRADIARAWRHGSVAMTEEYVPGRELT) contributes to the ATP binding site. The Mg(2+) site is built by D248, E262, and N264.

It belongs to the D-alanine--D-alanine ligase family. The cofactor is Mg(2+). Mn(2+) serves as cofactor.

It localises to the cytoplasm. It carries out the reaction 2 D-alanine + ATP = D-alanyl-D-alanine + ADP + phosphate + H(+). It functions in the pathway cell wall biogenesis; peptidoglycan biosynthesis. Its function is as follows. Cell wall formation. The protein is D-alanine--D-alanine ligase of Acidiphilium cryptum (strain JF-5).